A 166-amino-acid chain; its full sequence is Endoribonuclease YbeY (166 aa).

Residues His111, His115, and His121 each coordinate Zn(2+). The interval 141–166 is disordered; sequence LGYPDPYAEDESADHPHSDTPSKDHE. Positions 153–166 are enriched in basic and acidic residues; sequence ADHPHSDTPSKDHE.

Belongs to the endoribonuclease YbeY family. It depends on Zn(2+) as a cofactor.

The protein localises to the cytoplasm. In terms of biological role, single strand-specific metallo-endoribonuclease involved in late-stage 70S ribosome quality control and in maturation of the 3' terminus of the 16S rRNA. In Pseudomonas savastanoi pv. phaseolicola (strain 1448A / Race 6) (Pseudomonas syringae pv. phaseolicola (strain 1448A / Race 6)), this protein is Endoribonuclease YbeY.